Here is a 178-residue protein sequence, read N- to C-terminus: Membrane-spanning protein YciB (178 aa).

A run of 5 helical transmembrane segments spans residues 22-42, 52-72, 76-96, 121-141, and 151-171; these read IFIASFSLMIASLFTFIITSI, LINLIFVIVFGFLTLFYHNSS, WKVTIIYFLISIVFLINYLFI, LFWSIFFLICAVSNTYIILYF, and IFGLTILTLIAVIINGFYIYF.

Belongs to the YciB family.

Its subcellular location is the cell membrane. Plays a role in cell envelope biogenesis, maintenance of cell envelope integrity and membrane homeostasis. The protein is Membrane-spanning protein YciB of Buchnera aphidicola subsp. Baizongia pistaciae (strain Bp).